The primary structure comprises 471 residues: Alkaline phosphatase (471 aa).

Residues Met1–Ala21 form the signal peptide. Residue Asp73 coordinates Mg(2+). Asp73 contributes to the Zn(2+) binding site. The Phosphoserine intermediate role is filled by Ser124. Mg(2+) contacts are provided by Asp175 and Thr177. Disulfide bonds link Cys190/Cys200 and Cys308/Cys358. Glu344 is a Mg(2+) binding site. Zn(2+) contacts are provided by Asp349, His353, Asp391, His392, and His434.

It belongs to the alkaline phosphatase family. As to quaternary structure, isozymes 1 and 3 are a dimer of identical chains, isozyme 2 is a dimer of heterogeneous chains, one of each of the subunits from isozymes 1 and 3. Mg(2+) is required as a cofactor. Requires Zn(2+) as cofactor.

The protein resides in the periplasm. It catalyses the reaction a phosphate monoester + H2O = an alcohol + phosphate. The protein is Alkaline phosphatase (phoA) of Escherichia coli (strain K12).